A 381-amino-acid polypeptide reads, in one-letter code: Dof zinc finger protein 2 (381 aa).

A disordered region spans residues 19 to 81 (MLMGANPNPN…ARPQKEKALN (63 aa)). 2 stretches are compositionally biased toward low complexity: residues 23 to 32 (ANPNPNGSSN) and 40 to 59 (SAAS…AAGA). Residues 68 to 79 (TERRARPQKEKA) show a composition bias toward basic and acidic residues. The segment at 80 to 134 (LNCPRCNSTNTKFCYYNNYSLQQPRYFCKTCRRYWTEGGSLRNVPVGGGSRKNKR) adopts a Dof-type zinc-finger fold. Positions 82, 85, 107, and 110 each coordinate Zn(2+). Positions 329-349 (AGDANSGGDHQYDHGKNQGGG) are disordered.

Its subcellular location is the nucleus. Functionally, transcription factor that may transactivate seed storage protein genes in developing seeds. This Oryza sativa subsp. japonica (Rice) protein is Dof zinc finger protein 2.